We begin with the raw amino-acid sequence, 327 residues long: o-succinylbenzoate synthase (327 aa).

Lys-110 (proton donor) is an active-site residue. Residues Asp-138, Glu-165, and Asp-188 each contribute to the Mg(2+) site. Lys-212 functions as the Proton acceptor in the catalytic mechanism.

Belongs to the mandelate racemase/muconate lactonizing enzyme family. MenC type 1 subfamily. It depends on a divalent metal cation as a cofactor.

It carries out the reaction (1R,6R)-6-hydroxy-2-succinyl-cyclohexa-2,4-diene-1-carboxylate = 2-succinylbenzoate + H2O. Its pathway is quinol/quinone metabolism; 1,4-dihydroxy-2-naphthoate biosynthesis; 1,4-dihydroxy-2-naphthoate from chorismate: step 4/7. The protein operates within quinol/quinone metabolism; menaquinone biosynthesis. Functionally, converts 2-succinyl-6-hydroxy-2,4-cyclohexadiene-1-carboxylate (SHCHC) to 2-succinylbenzoate (OSB). This is o-succinylbenzoate synthase from Mycobacterium marinum (strain ATCC BAA-535 / M).